A 183-amino-acid polypeptide reads, in one-letter code: Large ribosomal subunit protein eL18 (183 aa).

Positions 150-183 (RHFGPAPGAPRSHTKPYVRTKGHERARPRRRSNV) are disordered. Positions 161–183 (SHTKPYVRTKGHERARPRRRSNV) are enriched in basic residues.

It belongs to the eukaryotic ribosomal protein eL18 family.

It localises to the cytoplasm. This Spodoptera frugiperda (Fall armyworm) protein is Large ribosomal subunit protein eL18 (RpL18).